A 361-amino-acid polypeptide reads, in one-letter code: Protein RecA (361 aa).

77 to 84 (GPESSGKT) lines the ATP pocket.

The protein belongs to the RecA family.

The protein resides in the cytoplasm. Can catalyze the hydrolysis of ATP in the presence of single-stranded DNA, the ATP-dependent uptake of single-stranded DNA by duplex DNA, and the ATP-dependent hybridization of homologous single-stranded DNAs. It interacts with LexA causing its activation and leading to its autocatalytic cleavage. The sequence is that of Protein RecA from Sinorhizobium medicae (strain WSM419) (Ensifer medicae).